The following is a 466-amino-acid chain: Ribosomal protein uS12 methylthiotransferase RimO (466 aa).

Residues 18–133 (PRIGFVSLGC…VMDAVHQHVP (116 aa)) enclose the MTTase N-terminal domain. [4Fe-4S] cluster-binding residues include cysteine 27, cysteine 63, cysteine 92, cysteine 164, cysteine 168, and cysteine 171. Residues 150–391 (LTPKHYAYLK…MAVAEAVSTA (242 aa)) form the Radical SAM core domain. The TRAM domain occupies 394–466 (QRRVGSSMQV…QGHDLIGELI (73 aa)).

Belongs to the methylthiotransferase family. RimO subfamily. The cofactor is [4Fe-4S] cluster.

The protein resides in the cytoplasm. The enzyme catalyses L-aspartate(89)-[ribosomal protein uS12]-hydrogen + (sulfur carrier)-SH + AH2 + 2 S-adenosyl-L-methionine = 3-methylsulfanyl-L-aspartate(89)-[ribosomal protein uS12]-hydrogen + (sulfur carrier)-H + 5'-deoxyadenosine + L-methionine + A + S-adenosyl-L-homocysteine + 2 H(+). In terms of biological role, catalyzes the methylthiolation of an aspartic acid residue of ribosomal protein uS12. The chain is Ribosomal protein uS12 methylthiotransferase RimO from Leptothrix cholodnii (strain ATCC 51168 / LMG 8142 / SP-6) (Leptothrix discophora (strain SP-6)).